The chain runs to 485 residues: MRIAMVSYEVYPFAKVGGLADVVGALPKYLERQNINVDIYMPYHKKVKQNAEKYGWAIEKITEKVDASMLRTEEKFEIYKTMLPGTKEVNVFLINNEYYFNADEVYAGPDLAEQAIFFSYSVIEAIRKLNFEYDIVHVNDWQTALIPVYLKTVFRDDPLLSKIATVLTIHNLGYQGIFEPEYLRFAGLPDYLYNIDGIEFYGKINFLKGGIIFSDIINTVSPTYAKEIQQKEYGEKLEGVLRARSSDLYGILNGIDYEEFNPLTDNKIYVNYDLNTIEKKKENKKLLQKELGLPERDVPMFGMINRLVDQKGLDIMAEIMDYVSLFDIQFVLLGTGEEKYENMFKKLGEKYPEKYSINLKFDIVLAQKIYAGCDMFLMPSRYEPCGLGQMYSLRYGTIPIVRYTGGLADTVKEYNPETKEGNGFGFEGFDPAHLLKAMARAIYFYNSKEDWNTLIKNAMTMDLSWDKSAKEYVKLYQRAKSKVQR.

K15 contacts ADP-alpha-D-glucose.

It belongs to the glycosyltransferase 1 family. Bacterial/plant glycogen synthase subfamily.

It carries out the reaction [(1-&gt;4)-alpha-D-glucosyl](n) + ADP-alpha-D-glucose = [(1-&gt;4)-alpha-D-glucosyl](n+1) + ADP + H(+). It functions in the pathway glycan biosynthesis; glycogen biosynthesis. In terms of biological role, synthesizes alpha-1,4-glucan chains using ADP-glucose. The protein is Glycogen synthase of Fervidobacterium nodosum (strain ATCC 35602 / DSM 5306 / Rt17-B1).